The sequence spans 250 residues: Urease accessory protein UreF (250 aa).

A disordered region spans residues 1-21 (MDEADPGEAEAAQAEAAQDGA). The segment covering 9–21 (AEAAQAEAAQDGA) has biased composition (low complexity).

It belongs to the UreF family. In terms of assembly, ureD, UreF and UreG form a complex that acts as a GTP-hydrolysis-dependent molecular chaperone, activating the urease apoprotein by helping to assemble the nickel containing metallocenter of UreC. The UreE protein probably delivers the nickel.

Its subcellular location is the cytoplasm. Required for maturation of urease via the functional incorporation of the urease nickel metallocenter. In Methylobacterium sp. (strain 4-46), this protein is Urease accessory protein UreF.